The primary structure comprises 172 residues: Interferon tau-2 (172 aa).

Cystine bridges form between Cys1/Cys99 and Cys29/Cys139. Asn78 carries an N-linked (GlcNAc...) asparagine glycan.

It belongs to the alpha/beta interferon family. IFN-alphaII subfamily. Constitutively and exclusively expressed in the mononuclear cells of the extraembryonic trophectoderm.

The protein resides in the secreted. In terms of biological role, paracrine hormone primarily responsible for maternal recognition of pregnancy. Interacts with endometrial receptors, probably type I interferon receptors, and blocks estrogen receptor expression, preventing the estrogen-induced increase in oxytocin receptor expression in the endometrium. This results in the suppression of the pulsatile endometrial release of the luteolytic hormone prostaglandin F2-alpha, hindering the regression of the corpus luteum (luteolysis) and therefore a return to ovarian cyclicity. This, and a possible direct effect of IFN-tau on prostaglandin synthesis, leads in turn to continued ovarian progesterone secretion, which stimulates the secretion by the endometrium of the nutrients required for the growth of the conceptus. In summary, displays particularly high antiviral and antiproliferative potency concurrently with particular weak cytotoxicity, high antiluteolytic activity and immunomodulatory properties. In contrast with other IFNs, IFN-tau is not virally inducible. The protein is Interferon tau-2 (IFNT2) of Bos taurus (Bovine).